The following is an 827-amino-acid chain: Glycerol-3-phosphate acyltransferase (827 aa).

The short motif at 309-314 (CHRSHI) is the HXXXXD motif element.

It belongs to the GPAT/DAPAT family.

It localises to the cell inner membrane. It catalyses the reaction sn-glycerol 3-phosphate + an acyl-CoA = a 1-acyl-sn-glycero-3-phosphate + CoA. It functions in the pathway phospholipid metabolism; CDP-diacylglycerol biosynthesis; CDP-diacylglycerol from sn-glycerol 3-phosphate: step 1/3. The protein is Glycerol-3-phosphate acyltransferase of Ectopseudomonas mendocina (strain ymp) (Pseudomonas mendocina).